The sequence spans 1675 residues: Clathrin heavy chain 1 (1675 aa).

Ala-2 carries the post-translational modification N-acetylalanine. The tract at residues 2–479 (AQILPIRFQE…VDPTLALSVY (478 aa)) is globular terminal domain. 7 WD40-like repeat regions span residues 24 to 67 (NIGF…RPIS), 68 to 107 (ADSAIMNPASKVIALKAGKTLQIFNIEMKSKMKAHTMTDD), 108 to 149 (VTFW…SSLA), 150 to 195 (GCQI…QPIE), 196 to 257 (GHAA…PEAQ), 258 to 301 (NDFP…ISGE), and 302 to 330 (TIFVTAPHEATAGIIGVNRKGQVLSVCVE). A Phosphoserine modification is found at Ser-67. Thr-105 carries the post-translational modification Phosphothreonine. Tyr-184 bears the Phosphotyrosine mark. Residue Thr-394 is modified to Phosphothreonine. Positions 449-465 (EKWLKEDKLECSEELGD) are binding site for the uncoating ATPase, involved in lattice disassembly. Positions 480 to 523 (LRANVPNKVIQCFAETGQVQKIVLYAKKVGYTPDWIFLLRNVMR) are flexible linker. Residues 524 to 634 (ISPDQGQQFA…RALEHFTDLY (111 aa)) form a distal segment region. Residues 524-1675 (ISPDQGQQFA…QPQPGFGYSM (1152 aa)) form a heavy chain arm region. 7 CHCR repeats span residues 537–683 (VQDE…QICV), 686–828 (ASKY…SEDV), 833–972 (ILVV…PLID), 979–1124 (LSET…VKEA), 1128–1269 (YIKA…FRLA), 1274–1420 (LHIV…LLLN), and 1423–1566 (LMVL…RECF). Tyr-634 is modified (phosphotyrosine). Residues 639-1675 (AVVHTHLLNP…QPQPGFGYSM (1037 aa)) are proximal segment. Lys-737 is subject to N6-succinyllysine. Position 856 is an N6-acetyllysine (Lys-856). Residue Tyr-899 is modified to Phosphotyrosine. Ser-1167 carries the post-translational modification Phosphoserine. Tyr-1206 carries the phosphotyrosine modification. The tract at residues 1213–1522 (AAKLLYNNVS…YLFKGNNRWK (310 aa)) is involved in binding clathrin light chain. Position 1229 is a phosphoserine (Ser-1229). Lys-1441 carries the N6-acetyllysine; alternate modification. Position 1441 is an N6-succinyllysine; alternate (Lys-1441). Phosphotyrosine occurs at positions 1477 and 1487. Ser-1494 is subject to Phosphoserine. Lys-1501 is subject to N6-acetyllysine. The tract at residues 1550-1675 (AEELLQWFLQ…QPQPGFGYSM (126 aa)) is trimerization.

Belongs to the clathrin heavy chain family. In terms of assembly, clathrin triskelions, composed of 3 heavy chains and 3 light chains, are the basic subunits of the clathrin coat. In the presence of light chains, hub assembly is influenced by both the pH and the concentration of calcium. Interacts with HIP1. Interacts with DENND1A, DENND1B and DENND1C. Interacts with ERBB2. Interacts with FKBP6. Interacts with OCRL. Interacts with CKAP5 and TACC3 forming the TACC3/ch-TOG/clathrin complex located at spindle inter-microtubules bridges; the complex implicates clathrin triskelions; TACC3 and CLTC are proposed to form a composite microtubule interaction surface. Plays a role in early autophagosome formation. Interacts with ATG16L1 (via N-terminus). Interacts with RFTN1; the interaction occurs in response to pathogens. Interacts with USP2 isoform 2. Interacts with TMEM106B (via N-terminus). Interacts with DNAJC6; this interaction produces a local change in heavy-chain contacts, creating a detectable global distortion of the clathrin coat and leads to the recruitment of HSPA8.

It is found in the cytoplasmic vesicle membrane. Its subcellular location is the membrane. It localises to the coated pit. The protein localises to the melanosome. The protein resides in the cytoplasm. It is found in the cytoskeleton. Its subcellular location is the spindle. In terms of biological role, clathrin is the major protein of the polyhedral coat of coated pits and vesicles. Two different adapter protein complexes link the clathrin lattice either to the plasma membrane or to the trans-Golgi network. Acts as a component of the TACC3/ch-TOG/clathrin complex proposed to contribute to stabilization of kinetochore fibers of the mitotic spindle by acting as inter-microtubule bridge. The TACC3/ch-TOG/clathrin complex is required for the maintenance of kinetochore fiber tension. Plays a role in early autophagosome formation. Interaction with DNAJC6 mediates the recruitment of HSPA8 to the clathrin lattice and creates local destabilization of the lattice promoting uncoating. In Mus musculus (Mouse), this protein is Clathrin heavy chain 1.